The chain runs to 341 residues: Heme A synthase (341 aa).

8 helical membrane-spanning segments follow: residues 8–28 (VIIW…VGGI), 92–112 (FHRF…VYFL), 126–146 (IVLL…VRSG), 160–180 (LHLT…LDLI), 201–221 (AALL…AGLI), 256–276 (VQFV…FLFF), 294–314 (LVVF…YSVP), and 315–335 (LALG…MTYT). His-260 serves as a coordination point for heme. A heme-binding site is contributed by His-321.

This sequence belongs to the COX15/CtaA family. Type 2 subfamily. In terms of assembly, interacts with CtaB. Requires heme b as cofactor.

The protein localises to the cell membrane. The enzyme catalyses Fe(II)-heme o + 2 A + H2O = Fe(II)-heme a + 2 AH2. It functions in the pathway porphyrin-containing compound metabolism; heme A biosynthesis; heme A from heme O: step 1/1. Functionally, catalyzes the conversion of heme O to heme A by two successive hydroxylations of the methyl group at C8. The first hydroxylation forms heme I, the second hydroxylation results in an unstable dihydroxymethyl group, which spontaneously dehydrates, resulting in the formyl group of heme A. This is Heme A synthase from Flavobacterium johnsoniae (strain ATCC 17061 / DSM 2064 / JCM 8514 / BCRC 14874 / CCUG 350202 / NBRC 14942 / NCIMB 11054 / UW101) (Cytophaga johnsonae).